Reading from the N-terminus, the 431-residue chain is Argininosuccinate lyase (431 aa).

It belongs to the lyase 1 family. Argininosuccinate lyase subfamily.

It is found in the cytoplasm. It catalyses the reaction 2-(N(omega)-L-arginino)succinate = fumarate + L-arginine. It functions in the pathway amino-acid biosynthesis; L-arginine biosynthesis; L-arginine from L-ornithine and carbamoyl phosphate: step 3/3. This Xanthomonas oryzae pv. oryzae (strain MAFF 311018) protein is Argininosuccinate lyase.